The sequence spans 344 residues: Ras association domain-containing protein 1 (344 aa).

S2 is subject to N-acetylserine. S2 bears the Phosphoserine mark. A mediates interaction with E4F1 region spans residues 2–119 (SGEPELIELR…DLGWEPAVER (118 aa)). R36 bears the Omega-N-methylarginine mark. Residues 51 to 105 (GHRFQPAGPATHTWCDLCGDFIWGVVRKGLQCARLSADCKFTCHYRCRALVCLDC) form a Phorbol-ester/DAG-type zinc finger. The span at 179–189 (SVPSSKKPPSL) shows a compositional bias: low complexity. The segment at 179 to 203 (SVPSSKKPPSLQDARRGPGRGTSVR) is disordered. The 95-residue stretch at 198–292 (RGTSVRRRTS…LSFVLKENDS (95 aa)) folds into the Ras-associating domain. An SARAH domain is found at 294-341 (EVNWDAFSMPELHNFLRILQREEEEHLRQILQKYSYCRQKIQEALHAC). An MOAP1-binding region spans residues 315 to 318 (EEEE).

In terms of assembly, interacts with MAP1S. Interacts with XPA. Binds to the N-terminal of CDC20 during prometaphase. Binds to STK3/MST2 and STK4/MST1. Recruited to the TNFRSF1A and TNFRSF10A complexes in response to their respective cognate ligand, after internalization. Can self-associate. Part of a complex with MDM2, DAXX, RASSF1 and USP7. Interacts with ECM2. Interacts with MOAP1. Interacts with E4F1. Interacts with RSSF5 and probably associates with HRAS via a RSSF1 isoform A-RSSF5 heterodimer. Interacts (via C-terminus) with DAXX (via N-terminus); the interaction is independent of MDM2 and TP53. Interacts (via N-terminus) with MDM2 (via C-terminus); the interaction is independent of TP53. Interacts with RAB39A. Interacts with RAB39B; the interaction is weak. As to quaternary structure, interacts (via N-terminus) with DAXX. Interacts with RAB39B; the interaction is strong. Does not interact with RAB39A. In terms of assembly, interacts (via N-terminus) with DAXX. In terms of tissue distribution, isoform A and isoform C are ubiquitously expressed in all tissues tested, however isoform A is absent in many corresponding cancer cell lines. Isoform B is mainly expressed in hematopoietic cells.

Its subcellular location is the cytoplasm. It is found in the cytoskeleton. It localises to the microtubule organizing center. The protein resides in the centrosome. The protein localises to the spindle. Its subcellular location is the spindle pole. It is found in the nucleus. Its function is as follows. Potential tumor suppressor. Required for death receptor-dependent apoptosis. Mediates activation of STK3/MST2 and STK4/MST1 during Fas-induced apoptosis by preventing their dephosphorylation. When associated with MOAP1, promotes BAX conformational change and translocation to mitochondrial membranes in response to TNF and TNFSF10 stimulation. Isoform A interacts with CDC20, an activator of the anaphase-promoting complex, APC, resulting in the inhibition of APC activity and mitotic progression. Inhibits proliferation by negatively regulating cell cycle progression at the level of G1/S-phase transition by regulating accumulation of cyclin D1 protein. Isoform C has been shown not to perform these roles, no function has been identified for this isoform. Isoform A disrupts interactions among MDM2, DAXX and USP7, thus contributing to the efficient activation of TP53 by promoting MDM2 self-ubiquitination in cell-cycle checkpoint control in response to DNA damage. The chain is Ras association domain-containing protein 1 from Homo sapiens (Human).